A 468-amino-acid polypeptide reads, in one-letter code: Citrate synthase, mitochondrial (468 aa).

Residues 1 to 30 (MSLISAGRVCARILGAKNSPCALIAARQAS) constitute a mitochondrion transit peptide. Residues His-303 and His-349 contribute to the active site. Arg-358 lines the oxaloacetate pocket. Asp-404 is an active-site residue. Oxaloacetate-binding residues include Arg-430 and Arg-450.

The protein belongs to the citrate synthase family. As to quaternary structure, homodimer.

The protein localises to the mitochondrion matrix. It catalyses the reaction oxaloacetate + acetyl-CoA + H2O = citrate + CoA + H(+). It participates in carbohydrate metabolism; tricarboxylic acid cycle; isocitrate from oxaloacetate: step 1/2. In terms of biological role, key enzyme of the Krebs tricarboxylic acid cycle which catalyzes the synthesis of citrate from acetyl coenzyme A and oxaloacetate. In Xenopus laevis (African clawed frog), this protein is Citrate synthase, mitochondrial (cs).